Here is a 181-residue protein sequence, read N- to C-terminus: Adenylate kinase (181 aa).

Position 10–15 (10–15 (GAGKGT)) interacts with ATP. An NMP region spans residues 30–59 (STGDLFRANISQGTELGKQAQEYMDAGKLV). AMP contacts are provided by residues threonine 31, arginine 36, 57–59 (KLV), 85–88 (GFPR), and glutamine 92. The tract at residues 126 to 132 (SRGRNDD) is LID. Arginine 127 provides a ligand contact to ATP. Positions 129 and 140 each coordinate AMP. Residue glycine 166 participates in ATP binding.

Belongs to the adenylate kinase family. Monomer.

The protein resides in the cytoplasm. It catalyses the reaction AMP + ATP = 2 ADP. It participates in purine metabolism; AMP biosynthesis via salvage pathway; AMP from ADP: step 1/1. Its function is as follows. Catalyzes the reversible transfer of the terminal phosphate group between ATP and AMP. Plays an important role in cellular energy homeostasis and in adenine nucleotide metabolism. The polypeptide is Adenylate kinase (Corynebacterium urealyticum (strain ATCC 43042 / DSM 7109)).